The sequence spans 68 residues: ATP synthase protein 8 (68 aa).

A helical transmembrane segment spans residues 8–24 (TWLTIITPTLLALFLIT). K54 carries the N6-acetyllysine; alternate modification. K54 bears the N6-succinyllysine; alternate mark. N6-acetyllysine is present on K57.

This sequence belongs to the ATPase protein 8 family. As to quaternary structure, F-type ATPases have 2 components, CF(1) - the catalytic core - and CF(0) - the membrane proton channel. Component of an ATP synthase complex composed of ATP5PB, ATP5MC1, ATP5F1E, ATP5PD, ATP5ME, ATP5PF, ATP5MF, MT-ATP6, MT-ATP8, ATP5F1A, ATP5F1B, ATP5F1D, ATP5F1C, ATP5PO, ATP5MG, ATP5MK and ATP5MJ. Interacts with PRICKLE3.

The protein localises to the mitochondrion membrane. Its function is as follows. Mitochondrial membrane ATP synthase (F(1)F(0) ATP synthase or Complex V) produces ATP from ADP in the presence of a proton gradient across the membrane which is generated by electron transport complexes of the respiratory chain. F-type ATPases consist of two structural domains, F(1) - containing the extramembraneous catalytic core and F(0) - containing the membrane proton channel, linked together by a central stalk and a peripheral stalk. During catalysis, ATP synthesis in the catalytic domain of F(1) is coupled via a rotary mechanism of the central stalk subunits to proton translocation. Part of the complex F(0) domain. Minor subunit located with subunit a in the membrane. The polypeptide is ATP synthase protein 8 (MT-ATP8) (Pongo pygmaeus (Bornean orangutan)).